The chain runs to 847 residues: Follistatin-related protein 5 (847 aa).

Residues 1–20 (MFRCWSAILILGFIFLASEG) form the signal peptide. One can recognise a Kazal-like domain in the interval 81-135 (ETRHAECACMDLCKQHYKPVCGSDGEFYENHCEVHRAACLKKQKITIVHNEDCFF). Disulfide bonds link Cys-87/Cys-119, Cys-93/Cys-112, and Cys-101/Cys-133. EF-hand domains are found at residues 175–210 (RKKP…EELN) and 211–246 (KDLS…QVIQ). The Ca(2+) site is built by Asp-188, Asp-190, Asn-192, Glu-199, Asp-226, Asn-228, Asp-230, His-232, and Glu-237. 2 consecutive Ig-like domains span residues 250–338 (PEDQ…FQVN) and 341–426 (PVIR…EDIS). 2 disulfide bridges follow: Cys-270/Cys-321 and Cys-362/Cys-413. Residues Asn-318 and Asn-394 are each glycosylated (N-linked (GlcNAc...) asparagine).

The protein resides in the secreted. The sequence is that of Follistatin-related protein 5 (Fstl5) from Mus musculus (Mouse).